Here is a 546-residue protein sequence, read N- to C-terminus: CTP synthase (546 aa).

Residues 1–265 (MTKYVFVTGG…DEIVCHKLGI (265 aa)) are amidoligase domain. Ser13 is a binding site for CTP. Residue Ser13 coordinates UTP. Residues 14 to 19 (SLGKGI) and Asp71 contribute to the ATP site. Mg(2+) is bound by residues Asp71 and Glu139. CTP-binding positions include 146 to 148 (DIE), 186 to 191 (KTKPTQ), and Lys222. Residues 186–191 (KTKPTQ) and Lys222 each bind UTP. The Glutamine amidotransferase type-1 domain occupies 290-543 (DIAFVGKYVD…VKAAIARHSA (254 aa)). Residue Gly351 coordinates L-glutamine. Cys378 functions as the Nucleophile; for glutamine hydrolysis in the catalytic mechanism. L-glutamine contacts are provided by residues 379–382 (LGMQ), Glu402, and Arg469. Active-site residues include His516 and Glu518.

This sequence belongs to the CTP synthase family. In terms of assembly, homotetramer.

The enzyme catalyses UTP + L-glutamine + ATP + H2O = CTP + L-glutamate + ADP + phosphate + 2 H(+). It catalyses the reaction L-glutamine + H2O = L-glutamate + NH4(+). It carries out the reaction UTP + NH4(+) + ATP = CTP + ADP + phosphate + 2 H(+). The protein operates within pyrimidine metabolism; CTP biosynthesis via de novo pathway; CTP from UDP: step 2/2. Its activity is regulated as follows. Allosterically activated by GTP, when glutamine is the substrate; GTP has no effect on the reaction when ammonia is the substrate. The allosteric effector GTP functions by stabilizing the protein conformation that binds the tetrahedral intermediate(s) formed during glutamine hydrolysis. Inhibited by the product CTP, via allosteric rather than competitive inhibition. Catalyzes the ATP-dependent amination of UTP to CTP with either L-glutamine or ammonia as the source of nitrogen. Regulates intracellular CTP levels through interactions with the four ribonucleotide triphosphates. In Azoarcus sp. (strain BH72), this protein is CTP synthase.